The primary structure comprises 574 residues: Urease subunit alpha (574 aa).

In terms of domain architecture, Urease spans 131–574 (GAIDSHIHFI…LPMAQRYLLL (444 aa)). Positions 136, 138, and 219 each coordinate Ni(2+). K219 carries the N6-carboxylysine modification. H221 contributes to the substrate binding site. H248 and H274 together coordinate Ni(2+). Residue H322 is the Proton donor of the active site. D362 contacts Ni(2+). The tract at residues 384–403 (KVQRGPLPEDAANPRGSRND) is disordered.

Belongs to the metallo-dependent hydrolases superfamily. Urease alpha subunit family. As to quaternary structure, heterotrimer of UreA (gamma), UreB (beta) and UreC (alpha) subunits. Three heterotrimers associate to form the active enzyme. Requires Ni cation as cofactor. Post-translationally, carboxylation allows a single lysine to coordinate two nickel ions.

The protein localises to the cytoplasm. The catalysed reaction is urea + 2 H2O + H(+) = hydrogencarbonate + 2 NH4(+). The protein operates within nitrogen metabolism; urea degradation; CO(2) and NH(3) from urea (urease route): step 1/1. This is Urease subunit alpha from Prochlorococcus marinus (strain MIT 9313).